The following is a 600-amino-acid chain: Elongation factor 4 (600 aa).

A tr-type G domain is found at lysine 5–lysine 187. Residues aspartate 17–threonine 22 and asparagine 134–aspartate 137 contribute to the GTP site.

Belongs to the TRAFAC class translation factor GTPase superfamily. Classic translation factor GTPase family. LepA subfamily.

The protein localises to the cell inner membrane. The catalysed reaction is GTP + H2O = GDP + phosphate + H(+). In terms of biological role, required for accurate and efficient protein synthesis under certain stress conditions. May act as a fidelity factor of the translation reaction, by catalyzing a one-codon backward translocation of tRNAs on improperly translocated ribosomes. Back-translocation proceeds from a post-translocation (POST) complex to a pre-translocation (PRE) complex, thus giving elongation factor G a second chance to translocate the tRNAs correctly. Binds to ribosomes in a GTP-dependent manner. This chain is Elongation factor 4, found in Rickettsia bellii (strain OSU 85-389).